We begin with the raw amino-acid sequence, 112 residues long: Putative pterin-4-alpha-carbinolamine dehydratase (112 aa).

It belongs to the pterin-4-alpha-carbinolamine dehydratase family.

It catalyses the reaction (4aS,6R)-4a-hydroxy-L-erythro-5,6,7,8-tetrahydrobiopterin = (6R)-L-erythro-6,7-dihydrobiopterin + H2O. The chain is Putative pterin-4-alpha-carbinolamine dehydratase from Shewanella piezotolerans (strain WP3 / JCM 13877).